The chain runs to 373 residues: tRNA-specific 2-thiouridylase MnmA (373 aa).

ATP is bound by residues 12-19 (GMSGGVDS) and Met-38. The tract at residues 98–100 (NPD) is interaction with target base in tRNA. Residue Cys-103 is the Nucleophile of the active site. A disulfide bridge connects residues Cys-103 and Cys-200. Residue Gly-127 coordinates ATP. Residues 150–152 (KDQ) are interaction with tRNA. Cys-200 functions as the Cysteine persulfide intermediate in the catalytic mechanism. The interval 312–313 (RY) is interaction with tRNA.

Belongs to the MnmA/TRMU family.

The protein localises to the cytoplasm. It catalyses the reaction S-sulfanyl-L-cysteinyl-[protein] + uridine(34) in tRNA + AH2 + ATP = 2-thiouridine(34) in tRNA + L-cysteinyl-[protein] + A + AMP + diphosphate + H(+). In terms of biological role, catalyzes the 2-thiolation of uridine at the wobble position (U34) of tRNA, leading to the formation of s(2)U34. The chain is tRNA-specific 2-thiouridylase MnmA from Streptococcus pneumoniae serotype 19F (strain G54).